We begin with the raw amino-acid sequence, 163 residues long: 3-hydroxyacyl-[acyl-carrier-protein] dehydratase FabZ (163 aa).

The active site involves H58.

It belongs to the thioester dehydratase family. FabZ subfamily.

Its subcellular location is the cytoplasm. The enzyme catalyses a (3R)-hydroxyacyl-[ACP] = a (2E)-enoyl-[ACP] + H2O. Its function is as follows. Involved in unsaturated fatty acids biosynthesis. Catalyzes the dehydration of short chain beta-hydroxyacyl-ACPs and long chain saturated and unsaturated beta-hydroxyacyl-ACPs. The sequence is that of 3-hydroxyacyl-[acyl-carrier-protein] dehydratase FabZ from Francisella philomiragia subsp. philomiragia (strain ATCC 25017 / CCUG 19701 / FSC 153 / O#319-036).